Consider the following 149-residue polypeptide: QVFGEGMFDYDLFPFLTSTVSPHYRHGLLRGFMDSGISEVRSDRDRFTINLDVKHFSPDDLTVKILDDFVEIHGKHSERQDDHGYISREFHRRYRLPSNLDQSSISCSLSADGILTFSGPKMMSNLVSSHSERPIPVSREEKPTSAPSS.

The region spanning 28–138 (LLRGFMDSGI…SHSERPIPVS (111 aa)) is the sHSP domain. 6 residues coordinate Zn(2+): His-55, His-76, Glu-78, His-83, His-91, and His-130. Residues 125-149 (NLVSSHSERPIPVSREEKPTSAPSS) form a disordered region. Basic and acidic residues predominate over residues 130–143 (HSERPIPVSREEKP). O-linked (GlcNAc) serine glycosylation is present at Ser-138.

It belongs to the small heat shock protein (HSP20) family. Heteropolymer composed of three CRYAA and one CRYAB subunits. Inter-subunit bridging via zinc ions enhances stability, which is crucial as there is no protein turn over in the lens. Can also form homodimers and homotetramers (dimers of dimers) which serve as the building blocks of homooligomers. Within homooligomers, the zinc-binding motif is created from residues of 3 different molecules. His-76 and Glu-78 from one molecule are ligands of the zinc ion, and His-83 and His-130 residues from additional molecules complete the site with tetrahedral coordination geometry.

Its subcellular location is the cytoplasm. It is found in the nucleus. Contributes to the transparency and refractive index of the lens. May act as a chaperone, preventing aggregation of various proteins under a wide range of stress conditions. This chain is Alpha-crystallin A chain (CRYAA), found in Rana temporaria (European common frog).